Reading from the N-terminus, the 337-residue chain is Ketol-acid reductoisomerase (NADP(+)) (337 aa).

The 180-residue stretch at 1–180 folds into the KARI N-terminal Rossmann domain; the sequence is MKIYYDTDVN…GGGRAGIIET (180 aa). NADP(+)-binding positions include 24-27, Arg47, Ser51, and 81-84; these read YGSQ and DELQ. Residue His106 is part of the active site. Gly132 lines the NADP(+) pocket. The 146-residue stretch at 181–326 folds into the KARI C-terminal knotted domain; that stretch reads TFKDETETDL…EKLRAMMPWL (146 aa). Mg(2+) is bound by residues Asp189, Glu193, Glu225, and Glu229. Position 250 (Ser250) interacts with substrate.

This sequence belongs to the ketol-acid reductoisomerase family. Mg(2+) is required as a cofactor.

The catalysed reaction is (2R)-2,3-dihydroxy-3-methylbutanoate + NADP(+) = (2S)-2-acetolactate + NADPH + H(+). It catalyses the reaction (2R,3R)-2,3-dihydroxy-3-methylpentanoate + NADP(+) = (S)-2-ethyl-2-hydroxy-3-oxobutanoate + NADPH + H(+). The protein operates within amino-acid biosynthesis; L-isoleucine biosynthesis; L-isoleucine from 2-oxobutanoate: step 2/4. Its pathway is amino-acid biosynthesis; L-valine biosynthesis; L-valine from pyruvate: step 2/4. Involved in the biosynthesis of branched-chain amino acids (BCAA). Catalyzes an alkyl-migration followed by a ketol-acid reduction of (S)-2-acetolactate (S2AL) to yield (R)-2,3-dihydroxy-isovalerate. In the isomerase reaction, S2AL is rearranged via a Mg-dependent methyl migration to produce 3-hydroxy-3-methyl-2-ketobutyrate (HMKB). In the reductase reaction, this 2-ketoacid undergoes a metal-dependent reduction by NADPH to yield (R)-2,3-dihydroxy-isovalerate. This is Ketol-acid reductoisomerase (NADP(+)) from Thermodesulfovibrio yellowstonii (strain ATCC 51303 / DSM 11347 / YP87).